An 88-amino-acid chain; its full sequence is Large ribosomal subunit protein bL31B (88 aa).

This sequence belongs to the bacterial ribosomal protein bL31 family. Type B subfamily. As to quaternary structure, part of the 50S ribosomal subunit.

The chain is Large ribosomal subunit protein bL31B from Corynebacterium efficiens (strain DSM 44549 / YS-314 / AJ 12310 / JCM 11189 / NBRC 100395).